Consider the following 95-residue polypeptide: Integration host factor subunit beta (95 aa).

It belongs to the bacterial histone-like protein family. Heterodimer of an alpha and a beta chain.

Its function is as follows. This protein is one of the two subunits of integration host factor, a specific DNA-binding protein that functions in genetic recombination as well as in transcriptional and translational control. This chain is Integration host factor subunit beta, found in Jannaschia sp. (strain CCS1).